Here is an 889-residue protein sequence, read N- to C-terminus: Alanine--tRNA ligase (889 aa).

Positions 569, 573, 671, and 675 each coordinate Zn(2+).

This sequence belongs to the class-II aminoacyl-tRNA synthetase family. Zn(2+) is required as a cofactor.

It is found in the cytoplasm. The enzyme catalyses tRNA(Ala) + L-alanine + ATP = L-alanyl-tRNA(Ala) + AMP + diphosphate. Functionally, catalyzes the attachment of alanine to tRNA(Ala) in a two-step reaction: alanine is first activated by ATP to form Ala-AMP and then transferred to the acceptor end of tRNA(Ala). Also edits incorrectly charged Ser-tRNA(Ala) and Gly-tRNA(Ala) via its editing domain. The sequence is that of Alanine--tRNA ligase from Parasynechococcus marenigrum (strain WH8102).